The primary structure comprises 1332 residues: Elongator complex protein 1 (1332 aa).

Serine 471, serine 804, serine 867, serine 1171, and serine 1174 each carry phosphoserine. A mediates dimerization region spans residues 885-1332; that stretch reads VDVNELYDHS…RTQWKLSLLD (448 aa). The segment at 1150 to 1208 is disordered; the sequence is QAGLDDEVPHGQESDLFSETSSVVSGSEMSGKYSHSNSRISARSSKNRRKAERKKHSLK. A compositionally biased stretch (polar residues) spans 1164–1177; the sequence is DLFSETSSVVSGSE. A required for binding to tRNA region spans residues 1191–1209; sequence ARSSKNRRKAERKKHSLKE. Positions 1194 to 1206 are enriched in basic residues; it reads SKNRRKAERKKHS.

This sequence belongs to the ELP1/IKA1 family. As to quaternary structure, homodimer; dimerization promotes ELP1 stability and elongator complex formation. Component of the elongator complex which consists of ELP1, ELP2, ELP3, ELP4, ELP5 and ELP6. Interacts preferentially with MAP3K14/NIK followed by IKK-alpha and IKK-beta.

The protein resides in the cytoplasm. It is found in the nucleus. It functions in the pathway tRNA modification; 5-methoxycarbonylmethyl-2-thiouridine-tRNA biosynthesis. Its function is as follows. Component of the elongator complex which is required for multiple tRNA modifications, including mcm5U (5-methoxycarbonylmethyl uridine), mcm5s2U (5-methoxycarbonylmethyl-2-thiouridine), and ncm5U (5-carbamoylmethyl uridine). The elongator complex catalyzes the formation of carboxymethyluridine in the wobble base at position 34 in tRNAs. Regulates the migration and branching of projection neurons in the developing cerebral cortex, through a process depending on alpha-tubulin acetylation. ELP1 binds to tRNA, mediating interaction of the elongator complex with tRNA. May act as a scaffold protein that assembles active IKK-MAP3K14 complexes (IKKA, IKKB and MAP3K14/NIK). The polypeptide is Elongator complex protein 1 (Homo sapiens (Human)).